Reading from the N-terminus, the 324-residue chain is MSPAAAAEPDGDQQDRHVSKLIFCFFVFGAVLLCVGVLLSIFGFQACQYKPLPDCPMVLKVAGPACAVVGLGAVILARSRAQLQLRAGLQRGQQMDPDRAFICGESRQFAQCLIFGFLFLTSGMLISVLGIWVPGCGSNWAQEPLNETDTGDSEPRMCGFLSLQIMGPLIVLVGLCFFVVAHVKKRNTLNAGQDASEREEGQIQIMEPVQVTVGDSVIIFPPPPPPYFPESSASAVAESPGTNSLLPNENPPSYYSIFNYGRTPTSEGAASERDCESIYTISGTNSSSEASHTPHLPSELPPRYEEKENAAATFLPLSSEPSPP.

4 consecutive transmembrane segments (helical) span residues 22–42 (IFCFFVFGAVLLCVGVLLSIF), 57–77 (MVLKVAGPACAVVGLGAVILA), 113–133 (LIFGFLFLTSGMLISVLGIWV), and 160–180 (FLSLQIMGPLIVLVGLCFFVV). The span at 229 to 239 (PESSASAVAES) shows a compositional bias: low complexity. Disordered regions lie at residues 229–248 (PESSASAVAESPGTNSLLPN) and 279–304 (YTISGTNSSSEASHTPHLPSELPPRY). Residues 279 to 291 (YTISGTNSSSEAS) are compositionally biased toward polar residues.

It localises to the membrane. This is Transmembrane protein 171 (TMEM171) from Homo sapiens (Human).